A 94-amino-acid polypeptide reads, in one-letter code: UPF0213 protein BH0048 (94 aa).

The 76-residue stretch at 1–76 (MNHYVYILEC…KHLSRRKKEQ (76 aa)) folds into the GIY-YIG domain.

It belongs to the UPF0213 family.

This is UPF0213 protein BH0048 from Halalkalibacterium halodurans (strain ATCC BAA-125 / DSM 18197 / FERM 7344 / JCM 9153 / C-125) (Bacillus halodurans).